Consider the following 827-residue polypeptide: Periplasmic nitrate reductase (827 aa).

A signal peptide (tat-type signal) is located at residues 1-32 (MELNRRDFMKANAAAAAALAAGITLPVKNVYA). In terms of domain architecture, 4Fe-4S Mo/W bis-MGD-type spans 37-93 (IKWDKAPCRFCGTGCSVLVGTQNGRMVASQGDPDAEVNRGLNCIKGYFLPKIIYGKD). Residues Cys-44, Cys-47, Cys-51, and Cys-79 each coordinate [4Fe-4S] cluster. Residues Lys-81, Gln-148, Asn-173, Cys-177, 210-217 (WGSNMAEM), 241-245 (STFEH), Met-371, Gln-375, Asn-481, 507-508 (SD), Lys-530, Asp-557, and 717-726 (TGRVLEHWHS) each bind Mo-bis(molybdopterin guanine dinucleotide). Residue Phe-793 participates in substrate binding. Mo-bis(molybdopterin guanine dinucleotide)-binding residues include Asn-801 and Lys-818.

This sequence belongs to the prokaryotic molybdopterin-containing oxidoreductase family. NasA/NapA/NarB subfamily. In terms of assembly, component of the periplasmic nitrate reductase NapAB complex composed of NapA and NapB. [4Fe-4S] cluster is required as a cofactor. Requires Mo-bis(molybdopterin guanine dinucleotide) as cofactor. In terms of processing, predicted to be exported by the Tat system. The position of the signal peptide cleavage has not been experimentally proven.

It is found in the periplasm. It carries out the reaction 2 Fe(II)-[cytochrome] + nitrate + 2 H(+) = 2 Fe(III)-[cytochrome] + nitrite + H2O. Functionally, catalytic subunit of the periplasmic nitrate reductase complex NapAB. Receives electrons from NapB and catalyzes the reduction of nitrate to nitrite. This Glaesserella parasuis serovar 5 (strain SH0165) (Haemophilus parasuis) protein is Periplasmic nitrate reductase.